A 481-amino-acid chain; its full sequence is Proline--tRNA ligase (481 aa).

The protein belongs to the class-II aminoacyl-tRNA synthetase family. ProS type 3 subfamily. Homodimer.

The protein resides in the cytoplasm. The enzyme catalyses tRNA(Pro) + L-proline + ATP = L-prolyl-tRNA(Pro) + AMP + diphosphate. Its function is as follows. Catalyzes the attachment of proline to tRNA(Pro) in a two-step reaction: proline is first activated by ATP to form Pro-AMP and then transferred to the acceptor end of tRNA(Pro). This is Proline--tRNA ligase from Prosthecochloris aestuarii (strain DSM 271 / SK 413).